The following is a 330-amino-acid chain: Aspartate--ammonia ligase (330 aa).

Belongs to the class-II aminoacyl-tRNA synthetase family. AsnA subfamily.

The protein localises to the cytoplasm. It carries out the reaction L-aspartate + NH4(+) + ATP = L-asparagine + AMP + diphosphate + H(+). The protein operates within amino-acid biosynthesis; L-asparagine biosynthesis; L-asparagine from L-aspartate (ammonia route): step 1/1. This Streptococcus equi subsp. zooepidemicus (strain H70) protein is Aspartate--ammonia ligase.